A 741-amino-acid polypeptide reads, in one-letter code: Pentatricopeptide repeat-containing protein At1g05670, mitochondrial (741 aa).

Residues 1–21 constitute a mitochondrion transit peptide; the sequence is MKKPFTGLLMKRGTLSSFRNF. PPR repeat units lie at residues 174–208, 209–244, 245–279, 280–314, 315–349, 350–384, 385–419, 420–454, 455–489, 490–524, 525–559, 560–594, 595–629, 630–664, and 665–699; these read DPRV…GLVL, SVDS…GVCW, NVAS…GYTP, DVIS…GLKP, NSYI…GILP, DTVV…DITP, DVLT…GLEP, DSVT…GCSP, NVVT…GLQP, NIFT…GLNA, DTVT…GLQP, TIVT…GIAP, NATT…GVGP, DGKT…GFSV, and SVST…GLAA.

It belongs to the PPR family. P subfamily.

Its subcellular location is the mitochondrion. In Arabidopsis thaliana (Mouse-ear cress), this protein is Pentatricopeptide repeat-containing protein At1g05670, mitochondrial.